Reading from the N-terminus, the 122-residue chain is Large ribosomal subunit protein uL14 (122 aa).

The protein belongs to the universal ribosomal protein uL14 family. As to quaternary structure, part of the 50S ribosomal subunit. Forms a cluster with proteins L3 and L19. In the 70S ribosome, L14 and L19 interact and together make contacts with the 16S rRNA in bridges B5 and B8.

Its function is as follows. Binds to 23S rRNA. Forms part of two intersubunit bridges in the 70S ribosome. The sequence is that of Large ribosomal subunit protein uL14 from Paracidovorax citrulli (strain AAC00-1) (Acidovorax citrulli).